Here is a 185-residue protein sequence, read N- to C-terminus: Large ribosomal subunit protein bL25 (185 aa).

The protein belongs to the bacterial ribosomal protein bL25 family. CTC subfamily. Part of the 50S ribosomal subunit; part of the 5S rRNA/L5/L18/L25 subcomplex. Contacts the 5S rRNA. Binds to the 5S rRNA independently of L5 and L18.

Its function is as follows. This is one of the proteins that binds to the 5S RNA in the ribosome where it forms part of the central protuberance. This chain is Large ribosomal subunit protein bL25, found in Chlamydia trachomatis serovar A (strain ATCC VR-571B / DSM 19440 / HAR-13).